The sequence spans 132 residues: Ribosome-binding factor A (132 aa).

The protein belongs to the RbfA family. As to quaternary structure, monomer. Binds 30S ribosomal subunits, but not 50S ribosomal subunits or 70S ribosomes.

Its subcellular location is the cytoplasm. One of several proteins that assist in the late maturation steps of the functional core of the 30S ribosomal subunit. Associates with free 30S ribosomal subunits (but not with 30S subunits that are part of 70S ribosomes or polysomes). Required for efficient processing of 16S rRNA. May interact with the 5'-terminal helix region of 16S rRNA. In Pseudomonas entomophila (strain L48), this protein is Ribosome-binding factor A.